The following is a 332-amino-acid chain: Phosphoribulokinase (332 aa).

This sequence belongs to the phosphoribulokinase family.

It catalyses the reaction D-ribulose 5-phosphate + ATP = D-ribulose 1,5-bisphosphate + ADP + H(+). It participates in carbohydrate biosynthesis; Calvin cycle. This chain is Phosphoribulokinase (prk), found in Synechocystis sp. (strain ATCC 27184 / PCC 6803 / Kazusa).